The chain runs to 249 residues: tRNA 2'-phosphotransferase 1 (249 aa).

M1 is modified (N-acetylmethionine). Disordered stretches follow at residues 1 to 25 (MNAPGGRRKEGRRTHRPREQDRNVQ) and 220 to 249 (KPLSLAGDKETETQSGPKLSSRGGRRKIQQ).

The protein belongs to the KptA/TPT1 family.

The catalysed reaction is 2'-phospho-[ligated tRNA] + NAD(+) = mature tRNA + ADP-alpha-D-ribose 1'',2''-cyclic phosphate + nicotinamide. In terms of biological role, catalyzes the last step of tRNA splicing, the transfer of the splice junction 2'-phosphate from ligated tRNA to NAD to produce ADP-ribose 1''-2'' cyclic phosphate. This Mus musculus (Mouse) protein is tRNA 2'-phosphotransferase 1 (Trpt1).